The sequence spans 312 residues: DNA-directed RNA polymerase subunit alpha (312 aa).

The segment at 1 to 229 (MLQYQIDRIE…ELFQPLATVT (229 aa)) is alpha N-terminal domain (alpha-NTD). The segment at 246-312 (IPLEELNLSV…ISIPQSRTSA (67 aa)) is alpha C-terminal domain (alpha-CTD).

Belongs to the RNA polymerase alpha chain family. In terms of assembly, in cyanobacteria the RNAP catalytic core is composed of 2 alpha, 1 beta, 1 beta', 1 gamma and 1 omega subunit. When a sigma factor is associated with the core the holoenzyme is formed, which can initiate transcription.

The catalysed reaction is RNA(n) + a ribonucleoside 5'-triphosphate = RNA(n+1) + diphosphate. DNA-dependent RNA polymerase catalyzes the transcription of DNA into RNA using the four ribonucleoside triphosphates as substrates. The chain is DNA-directed RNA polymerase subunit alpha from Prochlorococcus marinus (strain SARG / CCMP1375 / SS120).